The sequence spans 1479 residues: Chromosome partition protein MukB (1479 aa).

34-41 (GGNGAGKS) provides a ligand contact to ATP. Coiled-coil stretches lie at residues 138 to 163 (ETLN…MEGV) and 331 to 664 (QAAS…RLSQ). The flexible hinge stretch occupies residues 665–782 (PGGSEDPRLN…ALPLFGRAAR (118 aa)). Coiled coils occupy residues 831–1112 (DDPE…TAKA) and 1206–1257 (VEAI…MLNQ).

This sequence belongs to the SMC family. MukB subfamily. Homodimerization via its hinge domain. Binds to DNA via its C-terminal region. Interacts, and probably forms a ternary complex, with MukE and MukF via its C-terminal region. The complex formation is stimulated by calcium or magnesium. Interacts with tubulin-related protein FtsZ.

The protein localises to the cytoplasm. It localises to the nucleoid. Plays a central role in chromosome condensation, segregation and cell cycle progression. Functions as a homodimer, which is essential for chromosome partition. Involved in negative DNA supercoiling in vivo, and by this means organize and compact chromosomes. May achieve or facilitate chromosome segregation by condensation DNA from both sides of a centrally located replisome during cell division. The sequence is that of Chromosome partition protein MukB from Klebsiella pneumoniae.